Here is a 566-residue protein sequence, read N- to C-terminus: MPDLKERAARKEPGAAESASRESRGGNTRESASSAQGHRSRRFNRRSSTAALTPGSAQGRGVQTAPRAPVGHGGLRTGLTSRCPQPSARAKLPSVTRGAPLPPSPGKGHFGATPISHRLGLTERVHDASKLDCHLEDRKSASSLESRGKEVMPSDFWDHLKEQLSAVPPDFSCALELLKEIKEILLSLLLPRQSRLRNEIEEALDMEFLHQQADRGDLNVSYLSKYILNMMVLLCAPVRDEAVQRLENISDPVRLLRGIFQVLGQMKMDMVNYTIQSLQPQLQEHSIQFERAQFQERLNKDPSLLNHTTKWLTQAATQLIAPSGSCYDIQDPSSSSGPSPSDIAIPEPLSPAMVLSQGFLNLLTWDPENEEFPETLLADRSRLQELESQQNQLTILASVLLVASSFSGSVLFGSPQFVDRLKRITKSLVEDFNSRPEEVMQTVSDQVTEEIHQSLKNMGLSPLSSENTDSLIGQLQNIAKKENCVRSVIDQRIHLFLKCCFVLGVQRSLLDLPGGLSLIEAELAELGQKFVSLTHHNQQVFAPYYTEILKTLINPVQTLTTKVGSL.

A compositionally biased stretch (basic and acidic residues) spans 1–24 (MPDLKERAARKEPGAAESASRESR). Disordered regions lie at residues 1 to 112 (MPDL…HFGA) and 328 to 347 (DIQDPSSSSGPSPSDIAIPE). A compositionally biased stretch (polar residues) spans 25–37 (GGNTRESASSAQG). Serine 104 carries the phosphoserine modification. The segment covering 332 to 341 (PSSSSGPSPS) has biased composition (low complexity). Residues 393–413 (LTILASVLLVASSFSGSVLFG) traverse the membrane as a helical segment. Serine 461 is subject to Phosphoserine.

Belongs to the TCP11 family. In terms of assembly, found in a complex at least composed of MROH2B isoform 2, PRKACA isoform 2 and TCP11. Interacts with MROH2B isoform 2. Interacts with PRKACA isoform 2. Interacts with ODF1 (via leucine zipper motif). Constitutively phosphorylated on serine, threonine and tyrosine residues within the head and tail regions of noncapacitated spermatozoa. Phosphorylation on tyrosine residues increases upon sperm capacitation within the acrosomal region in a protein kinase A (PKA)-dependent signaling pathway.

Its subcellular location is the membrane. The protein localises to the cell projection. It localises to the cilium. It is found in the flagellum. The protein resides in the cytoplasmic vesicle. Its subcellular location is the secretory vesicle. The protein localises to the acrosome. Functionally, plays a role in the process of sperm capacitation and acrosome reactions. Probable receptor for the putative fertilization-promoting peptide (FPP) at the sperm membrane that may modulate the activity of the adenylyl cyclase cAMP pathway. The polypeptide is T-complex protein 11 homolog (Tcp11) (Rattus norvegicus (Rat)).